Here is a 341-residue protein sequence, read N- to C-terminus: Tetraacyldisaccharide 4'-kinase (341 aa).

54-61 (TVGGAGKT) serves as a coordination point for ATP.

The protein belongs to the LpxK family.

It catalyses the reaction a lipid A disaccharide + ATP = a lipid IVA + ADP + H(+). It participates in glycolipid biosynthesis; lipid IV(A) biosynthesis; lipid IV(A) from (3R)-3-hydroxytetradecanoyl-[acyl-carrier-protein] and UDP-N-acetyl-alpha-D-glucosamine: step 6/6. Functionally, transfers the gamma-phosphate of ATP to the 4'-position of a tetraacyldisaccharide 1-phosphate intermediate (termed DS-1-P) to form tetraacyldisaccharide 1,4'-bis-phosphate (lipid IVA). The sequence is that of Tetraacyldisaccharide 4'-kinase from Brucella suis (strain ATCC 23445 / NCTC 10510).